Consider the following 240-residue polypeptide: Cysteine-rich venom protein (240 aa).

A signal peptide spans 1 to 19 (MIAFIVLPILAAVLQQSSG). One can recognise an SCP domain in the interval 39 to 166 (DLHNSLRRSV…EYSYFYVCQY (128 aa)). 8 disulfide bridges follow: Cys75/Cys153, Cys92/Cys167, Cys148/Cys164, Cys186/Cys193, Cys189/Cys198, Cys202/Cys235, Cys211/Cys229, and Cys220/Cys233. A ShKT domain is found at 202–235 (CRQENKFTNCDSLVRQSSCQDNYMKTNCPASCFC).

This sequence belongs to the CRISP family. In terms of tissue distribution, expressed by the venom gland.

The protein localises to the secreted. Blocks contraction of smooth muscle elicited by high potassium-induced depolarization, but does not block caffeine-stimulated contraction. May target voltage-gated calcium channels on smooth muscle. The polypeptide is Cysteine-rich venom protein (Protobothrops jerdonii (Jerdon's pitviper)).